Consider the following 296-residue polypeptide: 2-haloacid dehalogenase, configuration-inverting (296 aa).

It belongs to the HAD-like hydrolase superfamily. S-2-haloalkanoic acid dehalogenase family.

It catalyses the reaction an (S)-2-haloacid + H2O = a (2R)-2-hydroxycarboxylate + a halide anion + H(+). The enzyme catalyses an (R)-2-haloacid + H2O = a (2S)-2-hydroxycarboxylate + a halide anion + H(+). Dehalogenates both (S)- and (R)-2-haloalkanoic acids to the corresponding (R)- and (S)-hydroxyalkanoic acids, respectively, with inversion of configuration at C-2. Acts on 2-haloalkanoic acids whose carbon chain lengths are five or less. This Alcaligenes xylosoxydans xylosoxydans (Achromobacter xylosoxidans) protein is 2-haloacid dehalogenase, configuration-inverting (dhlC).